A 281-amino-acid polypeptide reads, in one-letter code: Shikimate dehydrogenase (NADP(+)) (281 aa).

Residues 15-17 (SKS) and T62 each bind shikimate. The active-site Proton acceptor is the K66. Residues N87 and D102 each contribute to the shikimate site. Residues 127–131 (GAGGS), 151–156 (NRTPER), and L217 each bind NADP(+). Y219 lines the shikimate pocket. G241 serves as a coordination point for NADP(+).

The protein belongs to the shikimate dehydrogenase family. Homodimer.

It catalyses the reaction shikimate + NADP(+) = 3-dehydroshikimate + NADPH + H(+). Its pathway is metabolic intermediate biosynthesis; chorismate biosynthesis; chorismate from D-erythrose 4-phosphate and phosphoenolpyruvate: step 4/7. Its function is as follows. Involved in the biosynthesis of the chorismate, which leads to the biosynthesis of aromatic amino acids. Catalyzes the reversible NADPH linked reduction of 3-dehydroshikimate (DHSA) to yield shikimate (SA). This Stenotrophomonas maltophilia (strain R551-3) protein is Shikimate dehydrogenase (NADP(+)).